Reading from the N-terminus, the 337-residue chain is 4-hydroxythreonine-4-phosphate dehydrogenase (337 aa).

Residues His138 and Thr139 each contribute to the substrate site. A divalent metal cation-binding residues include His168, His212, and His267. Lys275, Asn284, and Arg293 together coordinate substrate.

This sequence belongs to the PdxA family. In terms of assembly, homodimer. It depends on Zn(2+) as a cofactor. Mg(2+) is required as a cofactor. Co(2+) serves as cofactor.

The protein localises to the cytoplasm. It carries out the reaction 4-(phosphooxy)-L-threonine + NAD(+) = 3-amino-2-oxopropyl phosphate + CO2 + NADH. It functions in the pathway cofactor biosynthesis; pyridoxine 5'-phosphate biosynthesis; pyridoxine 5'-phosphate from D-erythrose 4-phosphate: step 4/5. In terms of biological role, catalyzes the NAD(P)-dependent oxidation of 4-(phosphooxy)-L-threonine (HTP) into 2-amino-3-oxo-4-(phosphooxy)butyric acid which spontaneously decarboxylates to form 3-amino-2-oxopropyl phosphate (AHAP). This Beijerinckia indica subsp. indica (strain ATCC 9039 / DSM 1715 / NCIMB 8712) protein is 4-hydroxythreonine-4-phosphate dehydrogenase.